The sequence spans 511 residues: Glutamyl-tRNA(Gln) amidotransferase subunit A, mitochondrial (511 aa).

Active-site charge relay system residues include Lys-72 and Ser-149. The Acyl-ester intermediate role is filled by Ser-173.

This sequence belongs to the amidase family. GatA subfamily. Subunit of the heterotrimeric GatCAB amidotransferase (AdT) complex, composed of A, B and C subunits.

The protein localises to the mitochondrion. The enzyme catalyses L-glutamyl-tRNA(Gln) + L-glutamine + ATP + H2O = L-glutaminyl-tRNA(Gln) + L-glutamate + ADP + phosphate + H(+). Its function is as follows. Allows the formation of correctly charged Gln-tRNA(Gln) through the transamidation of misacylated Glu-tRNA(Gln) in the mitochondria. The reaction takes place in the presence of glutamine and ATP through an activated gamma-phospho-Glu-tRNA(Gln). The chain is Glutamyl-tRNA(Gln) amidotransferase subunit A, mitochondrial from Fusarium vanettenii (strain ATCC MYA-4622 / CBS 123669 / FGSC 9596 / NRRL 45880 / 77-13-4) (Fusarium solani subsp. pisi).